We begin with the raw amino-acid sequence, 170 residues long: Lipoprotein signal peptidase (170 aa).

Helical transmembrane passes span 12–32, 67–87, and 94–113; these read WYWVVVLVFLADQLSKQWVLS, WQRWLFTFVAVGFSVLLSVWL, and MWRLNLAYTLVIGGALGNLI. Residues aspartate 123 and aspartate 141 contribute to the active site. Residues 139–159 traverse the membrane as a helical segment; sequence IADSAICVGAGLIILDSFVAG.

It belongs to the peptidase A8 family.

It is found in the cell inner membrane. It carries out the reaction Release of signal peptides from bacterial membrane prolipoproteins. Hydrolyzes -Xaa-Yaa-Zaa-|-(S,diacylglyceryl)Cys-, in which Xaa is hydrophobic (preferably Leu), and Yaa (Ala or Ser) and Zaa (Gly or Ala) have small, neutral side chains.. It participates in protein modification; lipoprotein biosynthesis (signal peptide cleavage). Its function is as follows. This protein specifically catalyzes the removal of signal peptides from prolipoproteins. This is Lipoprotein signal peptidase from Shewanella pealeana (strain ATCC 700345 / ANG-SQ1).